Reading from the N-terminus, the 215-residue chain is Redox-sensing transcriptional repressor Rex (215 aa).

The H-T-H motif DNA-binding region spans 18 to 57 (LYHRYLKYLDESGKERVSSAELSEAVKVDSATIRRDFSYF). Position 92–97 (92–97 (GVGNLG)) interacts with NAD(+).

The protein belongs to the transcriptional regulatory Rex family. Homodimer.

It localises to the cytoplasm. Its function is as follows. Modulates transcription in response to changes in cellular NADH/NAD(+) redox state. The chain is Redox-sensing transcriptional repressor Rex from Listeria innocua serovar 6a (strain ATCC BAA-680 / CLIP 11262).